The primary structure comprises 434 residues: Glutamate-1-semialdehyde 2,1-aminomutase 1 (434 aa).

Lysine 270 bears the N6-(pyridoxal phosphate)lysine mark.

This sequence belongs to the class-III pyridoxal-phosphate-dependent aminotransferase family. HemL subfamily. Homodimer. Pyridoxal 5'-phosphate serves as cofactor.

The protein resides in the cytoplasm. The enzyme catalyses (S)-4-amino-5-oxopentanoate = 5-aminolevulinate. It functions in the pathway porphyrin-containing compound metabolism; protoporphyrin-IX biosynthesis; 5-aminolevulinate from L-glutamyl-tRNA(Glu): step 2/2. This Bacillus thuringiensis (strain Al Hakam) protein is Glutamate-1-semialdehyde 2,1-aminomutase 1.